Consider the following 373-residue polypeptide: Protein phosphatase 1K, mitochondrial (373 aa).

The region spanning 95 to 347 is the PPM-type phosphatase domain; that stretch reads KVGCSTQLGK…DNSTAIVVPF (253 aa). Mg(2+)-binding residues include Asp-128, Gly-129, and Asp-338.

This sequence belongs to the PP2C family. Requires Mg(2+) as cofactor. It depends on Mn(2+) as a cofactor.

Its subcellular location is the mitochondrion matrix. The catalysed reaction is O-phospho-L-seryl-[protein] + H2O = L-seryl-[protein] + phosphate. It catalyses the reaction O-phospho-L-threonyl-[protein] + H2O = L-threonyl-[protein] + phosphate. The polypeptide is Protein phosphatase 1K, mitochondrial (ppm1k) (Xenopus laevis (African clawed frog)).